The primary structure comprises 236 residues: 2,3,4,5-tetrahydropyridine-2,6-dicarboxylate N-acetyltransferase (236 aa).

This sequence belongs to the transferase hexapeptide repeat family. DapH subfamily.

It carries out the reaction (S)-2,3,4,5-tetrahydrodipicolinate + acetyl-CoA + H2O = L-2-acetamido-6-oxoheptanedioate + CoA. It participates in amino-acid biosynthesis; L-lysine biosynthesis via DAP pathway; LL-2,6-diaminopimelate from (S)-tetrahydrodipicolinate (acetylase route): step 1/3. Its function is as follows. Catalyzes the transfer of an acetyl group from acetyl-CoA to tetrahydrodipicolinate. The chain is 2,3,4,5-tetrahydropyridine-2,6-dicarboxylate N-acetyltransferase from Clostridium botulinum (strain Alaska E43 / Type E3).